Here is a 228-residue protein sequence, read N- to C-terminus: CD302 antigen (228 aa).

Residues 1–20 (MPHAALSSLVLLSLATAIVA) form the signal peptide. Residues 21 to 165 (DCPSSTWVQF…YDKKYLSDNH (145 aa)) lie on the Extracellular side of the membrane. The 120-residue stretch at 30 to 149 (FQGSCYAFLQ…CEISSVEGTL (120 aa)) folds into the C-type lectin domain. The N-linked (GlcNAc...) asparagine glycan is linked to N107. C125 and C140 are oxidised to a cystine. Residues 166-186 (ILISTLVIASTVTLAVLGAII) form a helical membrane-spanning segment. Residues 187–228 (WFLYRRNARSGFTSFSPAPLSPYSDGCALVVAEEDEYAVQLD) lie on the Cytoplasmic side of the membrane.

It localises to the membrane. Its subcellular location is the cell projection. It is found in the filopodium. The protein resides in the cytoplasm. The protein localises to the cell cortex. It localises to the microvillus. Functionally, potential multifunctional C-type lectin receptor that may play roles in endocytosis and phagocytosis as well as in cell adhesion and migration. This is CD302 antigen (Cd302) from Mus musculus (Mouse).